Consider the following 383-residue polypeptide: MAAVAPAGPGDSASAALDELSLNFTYGAPGAGNGSLSGDWYRRNQIHLFGVLLAILGNLVISISLNIQKYSHLQLAQQEHPRPYFKSVLWWGGVLLMAVGETGNFAAYGFAPITLIAPLGCVSVTGSAIISVTFLKDNLRASDLLGTTLAFAGTYLLVNFAPNITQAISARTVQYYLVGWQFLIYVILEILIFCILLYFYKRKGMKHMVILLTLVAILASLTVISVKAVSGMITFSVMDKMQLTYPIFYIMFIIMIASCVFQVKFLNQATKLYNTTTVVPVNHIFFTISAIIAGIIFYQEFLGAPFLTVFIYLFGCFLSFLGVFLVTRNREKEHLQQSYIDFGNIPGKQMLDKIQPDSHSLSYGTLPDGSDSTKSQSGEKKEV.

2 N-linked (GlcNAc...) asparagine glycosylation sites follow: Asn-23 and Asn-33. Transmembrane regions (helical) follow at residues 46–66, 88–108, 110–130, 144–164, 177–197, 209–229, and 243–263; these read IHLFGVLLAILGNLVISISLN, VLWWGGVLLMAVGETGNFAAY, FAPITLIAPLGCVSVTGSAII, LLGTTLAFAGTYLLVNFAPNI, LVGWQFLIYVILEILIFCILL, VILLTLVAILASLTVISVKAV, and LTYPIFYIMFIIMIASCVFQV. Residue Asn-274 is glycosylated (N-linked (GlcNAc...) asparagine). 2 consecutive transmembrane segments (helical) span residues 278–298 and 306–326; these read VVPVNHIFFTISAIIAGIIFY and FLTVFIYLFGCFLSFLGVFLV. Residues 355 to 383 are disordered; sequence QPDSHSLSYGTLPDGSDSTKSQSGEKKEV.

The protein belongs to the NIPA family.

The protein localises to the membrane. The polypeptide is NIPA-like protein 2 (NIPAL2) (Homo sapiens (Human)).